Here is a 950-residue protein sequence, read N- to C-terminus: Leucine--tRNA ligase (950 aa).

The short motif at 66–77 (PYPSGAGLHVGH) is the 'HIGH' region element. Positions 721–725 (KIGKS) match the 'KMSKS' region motif. Lysine 724 is an ATP binding site.

The protein belongs to the class-I aminoacyl-tRNA synthetase family.

The protein localises to the cytoplasm. It catalyses the reaction tRNA(Leu) + L-leucine + ATP = L-leucyl-tRNA(Leu) + AMP + diphosphate. The protein is Leucine--tRNA ligase of Nocardia farcinica (strain IFM 10152).